Consider the following 360-residue polypeptide: Photosystem II protein D1 (360 aa).

3 helical membrane passes run Tyr29–Ser46, His118–Leu133, and Trp142–Ala156. A chlorophyll a-binding site is contributed by His118. Pheophytin a is bound at residue Tyr126. Residues Asp170 and Glu189 each contribute to the [CaMn4O5] cluster site. A helical transmembrane segment spans residues Phe197–Leu218. His198 provides a ligand contact to chlorophyll a. Residues His215 and Ser264–Phe265 each bind a quinone. His215 lines the Fe cation pocket. His272 serves as a coordination point for Fe cation. The chain crosses the membrane as a helical span at residues Phe274–Leu288. The [CaMn4O5] cluster site is built by His332, Glu333, Asp342, and Ala344. Residues Ser345 to Gly360 constitute a propeptide that is removed on maturation.

This sequence belongs to the reaction center PufL/M/PsbA/D family. In terms of assembly, PSII is composed of 1 copy each of membrane proteins PsbA, PsbB, PsbC, PsbD, PsbE, PsbF, PsbH, PsbI, PsbJ, PsbK, PsbL, PsbM, PsbT, PsbX, PsbY, PsbZ, Psb30/Ycf12, at least 3 peripheral proteins of the oxygen-evolving complex and a large number of cofactors. It forms dimeric complexes. The D1/D2 heterodimer binds P680, chlorophylls that are the primary electron donor of PSII, and subsequent electron acceptors. It shares a non-heme iron and each subunit binds pheophytin, quinone, additional chlorophylls, carotenoids and lipids. D1 provides most of the ligands for the Mn4-Ca-O5 cluster of the oxygen-evolving complex (OEC). There is also a Cl(-1) ion associated with D1 and D2, which is required for oxygen evolution. The PSII complex binds additional chlorophylls, carotenoids and specific lipids. is required as a cofactor. In terms of processing, tyr-161 forms a radical intermediate that is referred to as redox-active TyrZ, YZ or Y-Z. Post-translationally, C-terminally processed by CTPA; processing is essential to allow assembly of the oxygen-evolving complex and thus photosynthetic growth.

The protein resides in the plastid. It localises to the chloroplast thylakoid membrane. The catalysed reaction is 2 a plastoquinone + 4 hnu + 2 H2O = 2 a plastoquinol + O2. Its function is as follows. Photosystem II (PSII) is a light-driven water:plastoquinone oxidoreductase that uses light energy to abstract electrons from H(2)O, generating O(2) and a proton gradient subsequently used for ATP formation. It consists of a core antenna complex that captures photons, and an electron transfer chain that converts photonic excitation into a charge separation. The D1/D2 (PsbA/PsbD) reaction center heterodimer binds P680, the primary electron donor of PSII as well as several subsequent electron acceptors. This chain is Photosystem II protein D1, found in Pyropia yezoensis (Susabi-nori).